We begin with the raw amino-acid sequence, 104 residues long: Defensin-2 (104 aa).

An N-terminal signal peptide occupies residues 1 to 19; it reads MKFFVLFAILIAIVHASCA. Cystine bridges form between cysteine 64–cysteine 95, cysteine 81–cysteine 100, and cysteine 85–cysteine 102.

This sequence belongs to the invertebrate defensin family. Type 1 subfamily. In terms of tissue distribution, low expression in head and thorax.

It is found in the secreted. In terms of biological role, antibacterial peptide mostly active against Gram-positive bacteria. The sequence is that of Defensin-2 from Apis mellifera (Honeybee).